Consider the following 442-residue polypeptide: Proline--tRNA ligase (442 aa).

This sequence belongs to the class-II aminoacyl-tRNA synthetase family. ProS type 2 subfamily. In terms of assembly, homodimer.

It localises to the cytoplasm. The catalysed reaction is tRNA(Pro) + L-proline + ATP = L-prolyl-tRNA(Pro) + AMP + diphosphate. Functionally, catalyzes the attachment of proline to tRNA(Pro) in a two-step reaction: proline is first activated by ATP to form Pro-AMP and then transferred to the acceptor end of tRNA(Pro). In Mesorhizobium japonicum (strain LMG 29417 / CECT 9101 / MAFF 303099) (Mesorhizobium loti (strain MAFF 303099)), this protein is Proline--tRNA ligase.